The sequence spans 625 residues: tRNA uridine 5-carboxymethylaminomethyl modification enzyme MnmG (625 aa).

Residue 14 to 19 (GAGHAG) participates in FAD binding. 273-287 (GPRYCPSIEDKIVRF) is a binding site for NAD(+).

It belongs to the MnmG family. Homodimer. Heterotetramer of two MnmE and two MnmG subunits. The cofactor is FAD.

The protein localises to the cytoplasm. NAD-binding protein involved in the addition of a carboxymethylaminomethyl (cmnm) group at the wobble position (U34) of certain tRNAs, forming tRNA-cmnm(5)s(2)U34. The sequence is that of tRNA uridine 5-carboxymethylaminomethyl modification enzyme MnmG from Clostridium botulinum (strain Okra / Type B1).